A 455-amino-acid polypeptide reads, in one-letter code: Gamma-glutamyl phosphate reductase (455 aa).

The protein belongs to the gamma-glutamyl phosphate reductase family.

Its subcellular location is the cytoplasm. The catalysed reaction is L-glutamate 5-semialdehyde + phosphate + NADP(+) = L-glutamyl 5-phosphate + NADPH + H(+). It participates in amino-acid biosynthesis; L-proline biosynthesis; L-glutamate 5-semialdehyde from L-glutamate: step 2/2. In terms of biological role, catalyzes the NADPH-dependent reduction of L-glutamate 5-phosphate into L-glutamate 5-semialdehyde and phosphate. The product spontaneously undergoes cyclization to form 1-pyrroline-5-carboxylate. The protein is Gamma-glutamyl phosphate reductase of Synechococcus sp. (strain JA-2-3B'a(2-13)) (Cyanobacteria bacterium Yellowstone B-Prime).